The sequence spans 390 residues: S-adenosylmethionine synthase 3 (390 aa).

Mg(2+) is bound at residue Glu9. His15 is an ATP binding site. Residue Glu43 participates in K(+) binding. Residues Glu56 and Gln99 each coordinate L-methionine. Residues 167–169 (DGK), 235–238 (SGRF), Asp246, 252–253 (RK), Ala269, Lys273, and Lys277 each bind ATP. Residue Asp246 participates in L-methionine binding. Lys277 contacts L-methionine.

Belongs to the AdoMet synthase family. As to quaternary structure, homotetramer. Mn(2+) serves as cofactor. It depends on Mg(2+) as a cofactor. The cofactor is Co(2+). Requires K(+) as cofactor. NH4(+) is required as a cofactor. In terms of tissue distribution, mostly expressed in roots, and, to a lower extent, in hypocotyls and cotyledons.

The protein resides in the cytoplasm. It carries out the reaction L-methionine + ATP + H2O = S-adenosyl-L-methionine + phosphate + diphosphate. The protein operates within amino-acid biosynthesis; S-adenosyl-L-methionine biosynthesis; S-adenosyl-L-methionine from L-methionine: step 1/1. Its activity is regulated as follows. Inhibited by products of SAMS reaction (SAM, Pi, PPi), substrate analogs (cycloleucine and ethionine), and alternative nucleotides (GTP, CTP and ADP). Strongly repressed by PPPi. In terms of biological role, catalyzes the formation of S-adenosylmethionine from methionine and ATP. The reaction comprises two steps that are both catalyzed by the same enzyme: formation of S-adenosylmethionine (AdoMet) and triphosphate, and subsequent hydrolysis of the triphosphate. This is S-adenosylmethionine synthase 3 (SAMS3) from Catharanthus roseus (Madagascar periwinkle).